A 332-amino-acid polypeptide reads, in one-letter code: MTIKIGINGFGRIGRVLFRLAQERENIEVVAINDLLDPKYIAYMLKYDSTHGNFKKDIEVKNNNLIINGKKIRITSIKDPEKLMWDKLLIDVVIESTGLFLTKDTAYKHILSGAKKVVITGPSKDDIPMFVRGANFDKYKGEKIVSNASCTTNCLAPLSKVIDDHFGIIEGLMTTVHASTATQKIVDSASKKDWRGGRGALQNIIPSSTGAAVAVGKVLPNLNGKLTGIAFRVPTANVSVVDLTVRYKKTATYNEICEVVKNASEQKMKGILGYTEDEVVSTDFNGKELTSIFDAKAGLSLNKNFAKLISWYDNETGYSSKVLDLVELVALK.

Residues 12 to 13, Asp34, Lys78, and Thr120 contribute to the NAD(+) site; that span reads RI. D-glyceraldehyde 3-phosphate contacts are provided by residues 149 to 151, Thr180, 209 to 210, and Arg232; these read SCT and TG. The active-site Nucleophile is the Cys150. Asn314 contributes to the NAD(+) binding site.

Belongs to the glyceraldehyde-3-phosphate dehydrogenase family. As to quaternary structure, homotetramer.

Its subcellular location is the cytoplasm. The catalysed reaction is D-glyceraldehyde 3-phosphate + phosphate + NAD(+) = (2R)-3-phospho-glyceroyl phosphate + NADH + H(+). It functions in the pathway carbohydrate degradation; glycolysis; pyruvate from D-glyceraldehyde 3-phosphate: step 1/5. In terms of biological role, catalyzes the oxidative phosphorylation of glyceraldehyde 3-phosphate (G3P) to 1,3-bisphosphoglycerate (BPG) using the cofactor NAD. The first reaction step involves the formation of a hemiacetal intermediate between G3P and a cysteine residue, and this hemiacetal intermediate is then oxidized to a thioester, with concomitant reduction of NAD to NADH. The reduced NADH is then exchanged with the second NAD, and the thioester is attacked by a nucleophilic inorganic phosphate to produce BPG. The sequence is that of Glyceraldehyde-3-phosphate dehydrogenase (gapA) from Buchnera aphidicola subsp. Schizaphis graminum (strain Sg).